Here is a 443-residue protein sequence, read N- to C-terminus: Ribosomal protein uS12 methylthiotransferase RimO (443 aa).

One can recognise an MTTase N-terminal domain in the interval 11–121; the sequence is PTVGFVSLGC…VMEAVHGALP (111 aa). The [4Fe-4S] cluster site is built by C20, C56, C85, C152, C156, and C159. One can recognise a Radical SAM core domain in the interval 138-375; it reads LTPRHYAYLK…METQAEISAA (238 aa). In terms of domain architecture, TRAM spans 378-443; that stretch reads DAKIGRTIEV…DAHDLWATPV (66 aa).

The protein belongs to the methylthiotransferase family. RimO subfamily. The cofactor is [4Fe-4S] cluster.

It localises to the cytoplasm. The catalysed reaction is L-aspartate(89)-[ribosomal protein uS12]-hydrogen + (sulfur carrier)-SH + AH2 + 2 S-adenosyl-L-methionine = 3-methylsulfanyl-L-aspartate(89)-[ribosomal protein uS12]-hydrogen + (sulfur carrier)-H + 5'-deoxyadenosine + L-methionine + A + S-adenosyl-L-homocysteine + 2 H(+). In terms of biological role, catalyzes the methylthiolation of an aspartic acid residue of ribosomal protein uS12. This chain is Ribosomal protein uS12 methylthiotransferase RimO, found in Thiobacillus denitrificans (strain ATCC 25259 / T1).